A 521-amino-acid polypeptide reads, in one-letter code: Proactivator polypeptide-like 1 (521 aa).

The signal sequence occupies residues 1–17 (MLCALLLLPSLLGATRA). Residues 18 to 59 (SPTSGPQECAKGSTVWCQDLQTAARCGAVGYCQGAVWNKPTA) constitute a propeptide that is removed on maturation. The region spanning 19–59 (PTSGPQECAKGSTVWCQDLQTAARCGAVGYCQGAVWNKPTA) is the Saposin A-type 1 domain. Saposin B-type domains are found at residues 60-144 (KSLP…EPLQ) and 180-258 (EGAL…EELG). 3 disulfides stabilise this stretch: cysteine 64-cysteine 140, cysteine 67-cysteine 134, and cysteine 95-cysteine 107. The propeptide occupies 146–180 (HLATLRPLSKEDTFEAVAPFMANGPLTFHPRQAPE). 3 disulfide bridges follow: cysteine 184-cysteine 254, cysteine 187-cysteine 248, and cysteine 213-cysteine 224. The N-linked (GlcNAc...) asparagine glycan is linked to asparagine 201. Residues 259–288 (APARLTQVVAMDGVPSLELGLPRKQSEMQM) constitute a propeptide that is removed on maturation. Saposin B-type domains lie at 290–370 (AGVT…GNRR) and 392–473 (QGSF…HGPR). 3 disulfides stabilise this stretch: cysteine 294/cysteine 366, cysteine 297/cysteine 360, and cysteine 325/cysteine 336. N-linked (GlcNAc...) asparagine glycosylation occurs at asparagine 311. A propeptide spanning residues 370–391 (RRARAVHDAYAIVPSPEWDAEN) is cleaved from the precursor. 3 cysteine pairs are disulfide-bonded: cysteine 396–cysteine 469, cysteine 399–cysteine 463, and cysteine 427–cysteine 438. Residues 474–521 (TPLLGTDQCALGPSFWCRSQEAAKLCNAVQHCQKHVWKEMHLHAGEHA) constitute a propeptide that is removed on maturation. In terms of domain architecture, Saposin A-type 2 spans 475–515 (PLLGTDQCALGPSFWCRSQEAAKLCNAVQHCQKHVWKEMHL).

The protein resides in the secreted. In terms of biological role, may activate the lysosomal degradation of sphingolipids. This Homo sapiens (Human) protein is Proactivator polypeptide-like 1 (PSAPL1).